The following is a 459-amino-acid chain: Mitochondrial distribution and morphology protein 34 (459 aa).

The 190-residue stretch at 1–190 (MSFRFNEAVF…LPSLIFNTSQ (190 aa)) folds into the SMP-LTD domain. The span at 338-347 (RSNSNDDNAK) shows a compositional bias: basic and acidic residues. Positions 338 to 375 (RSNSNDDNAKPRRRKIKCKKTRTPSNLQSQGEQAVDDS) are disordered. Over residues 348-359 (PRRRKIKCKKTR) the composition is skewed to basic residues.

The protein belongs to the MDM34 family. In terms of assembly, component of the ER-mitochondria encounter structure (ERMES) or MDM complex, composed of MMM1, MDM10, MDM12 and MDM34. Ubiquitinated by a SCF (SKP1-CUL1-F-box protein) E3 ubiquitin-protein ligase complex containing the F-box protein MDM30. Ubiquitination is important for mitochondrial integrity.

It localises to the mitochondrion outer membrane. Its function is as follows. Component of the ERMES/MDM complex, which serves as a molecular tether to connect the endoplasmic reticulum (ER) and mitochondria. Components of this complex are involved in the control of mitochondrial shape and protein biogenesis, and function in nonvesicular lipid trafficking between the ER and mitochondria. MDM34 is required for the interaction of the ER-resident membrane protein MMM1 and the outer mitochondrial membrane-resident beta-barrel protein MDM10. The sequence is that of Mitochondrial distribution and morphology protein 34 from Saccharomyces cerevisiae (strain RM11-1a) (Baker's yeast).